Consider the following 213-residue polypeptide: High frequency lysogenization protein HflD homolog (213 aa).

A coiled-coil region spans residues 79–122 (QGLNAELTRYTLSLMVLERKLSSAKGALNTLGDRINGLQRQLDH).

It belongs to the HflD family.

The protein localises to the cytoplasm. It is found in the cell inner membrane. This is High frequency lysogenization protein HflD homolog from Salmonella agona (strain SL483).